The following is a 148-amino-acid chain: uncharacterized protein (148 aa).

Low complexity predominate over residues 36–45 (PGAPSAGPMS). Residues 36–148 (PGAPSAGPMS…SGTAFFPGTT (113 aa)) form a disordered region. The segment covering 46-55 (DSNSKGSTPR) has biased composition (polar residues).

This is an uncharacterized protein from Bovine leukemia virus (isolate Japanese BLV-1) (BLV).